The sequence spans 331 residues: Cathepsin 7 (331 aa).

A signal peptide spans 1–17; the sequence is MTPTVFLSILCLGVALA. Residues 18–111 constitute a propeptide, activation peptide; the sequence is APAPDYNLDA…GKHIQKRNPK (94 aa). A Nuclear localization signal motif is present at residues 33 to 50; it reads KRSNDRTYSPEEEKQRRA. Residue Asn-72 is glycosylated (N-linked (GlcNAc...) asparagine). Cystine bridges form between Cys-133/Cys-176, Cys-167/Cys-209, and Cys-267/Cys-320. Cys-136 is an active-site residue. Residues His-274 and Asn-298 contribute to the active site.

It belongs to the peptidase C1 family. Expressed in placenta. Expressed in parietal and spiral artery-associated trophoblast giant cells, most abundantly during the phase of trophoblast invasion. From 14.5 dpc onwards, expressed at lower levels in labyrinth trophoblast cells. Expressed in trophoblast stem cells. Expressed in heart, liver and testis.

Its subcellular location is the endosome. The protein localises to the lysosome. The protein resides in the cytoplasm. It localises to the perinuclear region. It is found in the golgi apparatus. Its subcellular location is the nucleus. The protein localises to the secreted. The protein resides in the extracellular space. Functionally, involved in trophoblast cell proliferation and differentiation probably by affecting mitotic cell cycle progression. Proteolytic activity and nuclear localization are essential for its role in cell cycle progression. The chain is Cathepsin 7 from Mus musculus (Mouse).